The chain runs to 174 residues: Adenylate kinase (174 aa).

The tract at residues 12-41 (STGDMLRAAIKAGTPLGLEAKKIIDEGGLV) is NMP. Residues Thr-13, Arg-18, 39 to 41 (GLV), 67 to 70 (GFPR), and Gln-74 each bind AMP. The interval 104 to 141 (GRRVHLASGRTYHVTYNPPKVEGKDDVTGEDLIQRDDD) is LID. Residues Arg-105 and 114–115 (TY) contribute to the ATP site. Arg-138 and Arg-149 together coordinate AMP.

It belongs to the adenylate kinase family. Monomer.

The protein localises to the cytoplasm. It carries out the reaction AMP + ATP = 2 ADP. It functions in the pathway purine metabolism; AMP biosynthesis via salvage pathway; AMP from ADP: step 1/1. In terms of biological role, catalyzes the reversible transfer of the terminal phosphate group between ATP and AMP. Plays an important role in cellular energy homeostasis and in adenine nucleotide metabolism. The chain is Adenylate kinase from Neisseria lactamica.